The following is a 270-amino-acid chain: Phosphatidylglycerol--prolipoprotein diacylglyceryl transferase (270 aa).

The next 7 membrane-spanning stretches (helical) occupy residues 14-34, 60-80, 95-115, 128-148, 176-196, 202-222, and 238-258; these read VIFEIGPIGLRWYGLMYLLGF, LLFNGFMGVFLGGRIGYVLFY, VWEGGMSFHGGLIGVILAMLI, ADFVAPLIPFGLGMGRIGNFI, SQLYEAVLEGIVLFFILNWYI, IGATAGLFLLGYGIFRFIVEF, and ISMGQILSTPMILIGAVIMLV. Arg143 is a binding site for a 1,2-diacyl-sn-glycero-3-phospho-(1'-sn-glycerol).

This sequence belongs to the Lgt family.

It is found in the cell inner membrane. The enzyme catalyses L-cysteinyl-[prolipoprotein] + a 1,2-diacyl-sn-glycero-3-phospho-(1'-sn-glycerol) = an S-1,2-diacyl-sn-glyceryl-L-cysteinyl-[prolipoprotein] + sn-glycerol 1-phosphate + H(+). The protein operates within protein modification; lipoprotein biosynthesis (diacylglyceryl transfer). Catalyzes the transfer of the diacylglyceryl group from phosphatidylglycerol to the sulfhydryl group of the N-terminal cysteine of a prolipoprotein, the first step in the formation of mature lipoproteins. The chain is Phosphatidylglycerol--prolipoprotein diacylglyceryl transferase from Pasteurella multocida (strain Pm70).